The chain runs to 692 residues: MSRLSPLDKYRNIGIMAHIDAGKTTTTERILYYTGVSHKIGEVHEGTATMDWMEQEQERGITITSAATTCEWNDHRINIIDTPGHVDFTIEVERSLRVLDGAVAVFCSVGGVEPQSETVWRQADKYRVPRIAFINKMDRIGADFFRGVQMIKDRLKANPVPLQLPVGKEDYFKGIVDLVRMKAIIWDEESLGAKFHEEEIPADLLDEAKEWRDKLIEEISSHDDALMEKYLGGEELTEAEIMAAIRSCTINIQIIPVVCGSSFKNKGVQNLLDAVVDYMPSPLDIPAIKGIDESGAEVERKADDTEPFSALGFKIMTDPFVGQLTFIRVYSGVLQSGSYVYNATKGKRERIGRLLKMHANKREEIKEVYAGDIAAAVGLKYTTTGDTLCNEDQAVILESIEFPEPVISIAIEPKTKSDQEKLGLSLQKLASEDPSFRVKTDEETGQTIISGMGELHLEIIVDRMMREFKVEANVGKPQVAYRETITKKVKVEGKFVRQSGGRGQYGHVWLEVEPQPEPGKGYEFVDAIKGGVVPREYIPAVDKGIQEATDNGVLAGFPVVDVKVTLIDGSYHEVDSSEMAFKIAGSMGFKEGCQKAGPILLEPIMSVEVVVPEEYMGEVIGDLNSRRGRIMGMDSRAGAQVVSSMVPLANMFGYSTDLRSATQGRATYAMTFDHYEPVPKSVSDEIIAKVKG.

A tr-type G domain is found at 8–283 (DKYRNIGIMA…AVVDYMPSPL (276 aa)). Residues 17-24 (AHIDAGKT), 81-85 (DTPGH), and 135-138 (NKMD) contribute to the GTP site.

It belongs to the TRAFAC class translation factor GTPase superfamily. Classic translation factor GTPase family. EF-G/EF-2 subfamily.

It localises to the cytoplasm. Catalyzes the GTP-dependent ribosomal translocation step during translation elongation. During this step, the ribosome changes from the pre-translocational (PRE) to the post-translocational (POST) state as the newly formed A-site-bound peptidyl-tRNA and P-site-bound deacylated tRNA move to the P and E sites, respectively. Catalyzes the coordinated movement of the two tRNA molecules, the mRNA and conformational changes in the ribosome. The sequence is that of Elongation factor G from Trichlorobacter lovleyi (strain ATCC BAA-1151 / DSM 17278 / SZ) (Geobacter lovleyi).